A 427-amino-acid chain; its full sequence is Transcobalamin-2 (427 aa).

The first 18 residues, 1 to 18 (MELLKALLLLSGVLGALA), serve as a signal peptide directing secretion. 3 disulfide bridges follow: Cys21/Cys268, Cys116/Cys310, and Cys165/Cys208. Residues 152–156 (TSYYQ), His193, 193–197 (HLSVD), Asn245, Ser248, Gln292, and 395–397 (WQL) contribute to the cob(II)alamin site.

This sequence belongs to the eukaryotic cobalamin transport proteins family. In terms of assembly, interacts with CD320 (via LDL-receptor class A domains).

Its subcellular location is the secreted. Functionally, primary vitamin B12-binding and transport protein. Delivers cobalamin to cells. This Rattus norvegicus (Rat) protein is Transcobalamin-2 (Tcn2).